The primary structure comprises 342 residues: Isopentenyl-diphosphate delta-isomerase (342 aa).

Position 11–12 (11–12) interacts with substrate; it reads RK. Residues serine 68, 69 to 71, serine 99, and asparagine 127 contribute to the FMN site; that span reads SMT. 99 to 101 is a substrate binding site; sequence SMR. Residue glutamine 162 coordinates substrate. Position 163 (glutamate 163) interacts with Mg(2+). FMN is bound by residues lysine 194, threonine 224, 274–276, and 295–296; these read GLK and AG.

It belongs to the IPP isomerase type 2 family. As to quaternary structure, homooctamer. Dimer of tetramers. Requires FMN as cofactor. The cofactor is NADPH. Mg(2+) serves as cofactor.

It localises to the cytoplasm. The enzyme catalyses isopentenyl diphosphate = dimethylallyl diphosphate. Functionally, involved in the biosynthesis of isoprenoids. Catalyzes the 1,3-allylic rearrangement of the homoallylic substrate isopentenyl (IPP) to its allylic isomer, dimethylallyl diphosphate (DMAPP). The chain is Isopentenyl-diphosphate delta-isomerase from Rickettsia akari (strain Hartford).